Here is a 124-residue protein sequence, read N- to C-terminus: U12-barytoxin-Tl1a (124 aa).

An N-terminal signal peptide occupies residues 1-20 (MKTMIAWLVLLTFAAALCFA). Residues 21–78 (DEGLKQEHMNERKKSRFREDIPDEISEDLLLQEMEAMEAELLEKEMRMEENRNSREKR) constitute a propeptide that is removed on maturation. Disulfide bonds link Cys-79–Cys-99, Cys-86–Cys-104, and Cys-98–Cys-118.

This sequence belongs to the neurotoxin 14 (magi-1) family. 04 (ICK-6) subfamily. As to expression, expressed by the venom gland.

It localises to the secreted. Its function is as follows. Ion channel inhibitor. The polypeptide is U12-barytoxin-Tl1a (Trittame loki (Brush-footed trapdoor spider)).